The following is a 247-amino-acid chain: MERAEALTSSFIWRPNANANAEITPSCPRCGSSNTKFCYYNNYSLTQPRYFCKGCRRYWTKGGSLRNVPVGGGCRKSRRPKSSSGNNTKTSLTANSGNPGGGSPSIDLALVYANFLNPKPDESILQENCDLATTDFLVDNPTGTSMDPSWSMDINDGHHDHYINPVEHIVEECGYNGLPPFPGEELLSLDTNGVWSDALLIGHNHVDVGVTPVQAVHEPVVHFADESNDSTNLLFGSWSPFDFTADG.

The Dof-type zinc finger occupies 25–79 (PSCPRCGSSNTKFCYYNNYSLTQPRYFCKGCRRYWTKGGSLRNVPVGGGCRKSRR). Zn(2+) contacts are provided by Cys27, Cys30, Cys52, and Cys55. The segment at 70–100 (VGGGCRKSRRPKSSSGNNTKTSLTANSGNPG) is disordered. Over residues 82-94 (SSSGNNTKTSLTA) the composition is skewed to polar residues.

The protein localises to the nucleus. Functionally, transcription factor that binds specifically to a 5'-AA[AG]G-3' consensus core sequence. The polypeptide is Dof zinc finger protein DOF3.5 (DOF3.5) (Arabidopsis thaliana (Mouse-ear cress)).